We begin with the raw amino-acid sequence, 463 residues long: Phosphoglycerate transporter protein (463 aa).

Topologically, residues 1–29 (MLTILKTGQSAHKVPPEKVQATYGRYRIQ) are cytoplasmic. A run of 12 helical transmembrane segments spans residues 30–50 (ALLS…NFTL), 59–79 (LDLS…AYGI), 106–126 (IVNV…LVVF), 127–147 (NGLF…NWFP), 160–180 (ISHN…FAIL), 188–208 (ASYI…LVLG), 267–287 (VFVY…LLTV), 297–317 (VAFL…GWLS), 326–346 (MPLA…YWKS), 349–369 (LLMV…PQFL), 391–411 (GFMS…VMVD), and 413–433 (LGWY…ILFC).

This sequence belongs to the major facilitator superfamily. Organophosphate:Pi antiporter (OPA) (TC 2.A.1.4) family.

Its subcellular location is the cell inner membrane. The phosphoglycerate transporter protein is a part of the PGT transport system. It is the membrane bound transporter for phosphoglycerate into salmonella. The protein is Phosphoglycerate transporter protein (pgtP) of Salmonella typhimurium (strain LT2 / SGSC1412 / ATCC 700720).